We begin with the raw amino-acid sequence, 393 residues long: SH3 domain-binding protein 5-like (393 aa).

Disordered regions lie at residues 1–59 and 272–332; these read MAEL…LDPR and HARR…DTDT. Thr13 is modified (phosphothreonine). Residues 18–28 are compositionally biased toward basic and acidic residues; it reads LRPEVVEDEVP. 2 positions are modified to phosphoserine: Ser30 and Ser49. Coiled-coil stretches lie at residues 59–140 and 169–272; these read RIQE…YERA and WQEM…EQIH. Positions 304 to 313 are enriched in gly residues; that stretch reads GDSGIEGAEG. The segment covering 317–332 has biased composition (low complexity); the sequence is EEGSSLGPGPAPDTDT. Ser343, Ser350, Ser358, Ser362, and Ser378 each carry phosphoserine. The interval 364–393 is disordered; sequence DGQELGTRSGGRRGSDGGVRGGRHQRSVSL. Over residues 384–393 the composition is skewed to basic residues; that stretch reads GGRHQRSVSL.

Belongs to the SH3BP5 family.

In terms of biological role, functions as a guanine nucleotide exchange factor (GEF) for RAB11A. The protein is SH3 domain-binding protein 5-like (SH3BP5L) of Pongo abelii (Sumatran orangutan).